Consider the following 373-residue polypeptide: ADP-forming sulfoacetate-CoA ligase subunit SauC (373 aa).

The ATP-grasp domain occupies 9–249 (KEAFREKGLP…YLQFNGDIAL (241 aa)). Position 35–97 (35–97 (FAEVGFPCVL…EEAVDIDREI (63 aa))) interacts with ATP. Mg(2+) contacts are provided by Glu186 and Asn188.

It belongs to the succinate/malate CoA ligase beta subunit family. In terms of assembly, forms a complex with SauD. The cofactor is Mg(2+).

It carries out the reaction sulfoacetate + ATP + CoA = sulfoacetyl-CoA + ADP + phosphate. In terms of biological role, involved in the degradation of sulfoacetate. Catalyzes the CoA- and ATP-dependent conversion of sulfoacetate to sulfoacetyl-CoA and ADP. Cannot use other sulfonic and carboxylic acids, and shows only residual activity with 3-sulfopropanoate and malonic acid. The protein is ADP-forming sulfoacetate-CoA ligase subunit SauC of Bilophila wadsworthia (strain 3_1_6).